Reading from the N-terminus, the 307-residue chain is MIRHFLRDDDLSPAEQAEVLELAAELKKDPVSRRPLQGPRGVAVIFDKNSTRTRFSFELGIAQLGGHAVVVDSGSTQLGRDETLQDTAKVLSRYVDAIVWRTFGQERLDAMASVATVPVINALSDEFHPCQVLADLQTIAERKGALRGLRLSYFGDGANNMAHSLLLGGVTAGIHVTVAAPEGFLPDPSVRAAAERRAQDTGASVTVTADAHAAAAGADVLVTDTWTSMGQENDGLDRVKPFRPFQLNSRLLALADSDAIVLHCLPAHRGDEITDAVMDGPASAVWDEAENRLHAQKALLVWLLERS.

Carbamoyl phosphate-binding positions include 50-53, Gln-77, Arg-101, and 128-131; these read STRT and HPCQ. L-ornithine-binding positions include Asn-160, Asp-224, and 228-229; that span reads SM. Residues 264-265 and Arg-292 contribute to the carbamoyl phosphate site; that span reads CL.

This sequence belongs to the aspartate/ornithine carbamoyltransferase superfamily. OTCase family. Homotrimer.

The protein resides in the cytoplasm. The enzyme catalyses carbamoyl phosphate + L-ornithine = L-citrulline + phosphate + H(+). The protein operates within amino-acid biosynthesis; L-arginine biosynthesis; L-arginine from L-ornithine and carbamoyl phosphate: step 1/3. Its function is as follows. Reversibly catalyzes the transfer of the carbamoyl group from carbamoyl phosphate (CP) to the N(epsilon) atom of ornithine (ORN) to produce L-citrulline, which is a substrate for argininosuccinate synthetase, the enzyme involved in the final step in arginine biosynthesis. The polypeptide is Ornithine carbamoyltransferase (argF) (Mycobacterium bovis (strain ATCC BAA-935 / AF2122/97)).